The following is a 495-amino-acid chain: Bile acid-sensitive ion channel (495 aa).

The interval 1-30 is binds the plasma membrane and stabilizes the channel in the closed state; that stretch reads MEHTEKSQVHAEKGLLGKIKRYLSKRPLPS. The Cytoplasmic portion of the chain corresponds to 1–61; sequence MEHTEKSQVH…NIAQNQNKVR (61 aa). The helical transmembrane segment at 62-82 threads the bilayer; it reads KVIWLAVVLGSVSLLVWQIYS. At 83–459 the chain is on the extracellular side; the sequence is RLVNYFTWPT…GLFCGASLIT (377 aa). Disulfide bonds link cysteine 112-cysteine 207, cysteine 185-cysteine 192, cysteine 298-cysteine 377, cysteine 315-cysteine 373, cysteine 328-cysteine 350, and cysteine 330-cysteine 342. 3 N-linked (GlcNAc...) asparagine glycosylation sites follow: asparagine 147, asparagine 163, and asparagine 179. Residues asparagine 370, asparagine 405, and asparagine 421 are each glycosylated (N-linked (GlcNAc...) asparagine). The short motif at 454–456 is the GAS motif; ion selectivity filter element; the sequence is GAS. Residues 460–480 traverse the membrane as a helical segment; the sequence is IIEIIEYFFTNFYWVLIFFLL. Topologically, residues 481 to 495 are cytoplasmic; sequence KILETIQRTSPPQAV.

It belongs to the amiloride-sensitive sodium channel (TC 1.A.6) family. ASIC5 subfamily. Forms homotrimeric channels. In terms of tissue distribution, expressed by cholangiocytes (at protein level). Detected in cerebellum, brainstem, kidney, liver, hepatocytes, lung, intestine and embryo. In the cerebellum, restricted to interneurons in the granular layer, specifically in GRM1-expressing unipolar brush cells of the vestibulocerebellum.

Its subcellular location is the apical cell membrane. The protein localises to the cell membrane. The enzyme catalyses Na(+)(in) = Na(+)(out). It catalyses the reaction Li(+)(in) = Li(+)(out). It carries out the reaction K(+)(in) = K(+)(out). The catalysed reaction is H(+)(in) = H(+)(out). Inhibited by the diuretic drug amiloride. Contrary to its rat ortholog it is not inhibited by Ca(2+). Its function is as follows. Forms bile acid-gated sodium channels and may play a role in bile acid-dependent absorption and secretion by epithelial cells of the bile ducts. Displays high selectivity for sodium ions but can also permit the permeation of other cations. The gating could be indirect and the consequence of alterations of the membrane environment of the channel by bile acids. As a sodium channel of type II unipolar brush cells of the vestibulocerebellum, controlling the electrical activity of these cells, could play a role in motor coordination and balance. The chain is Bile acid-sensitive ion channel from Mus musculus (Mouse).